The following is a 314-amino-acid chain: DDRGK domain-containing protein 1 (314 aa).

Residues 1–28 (MVAPVWYLVAAALLVGFILFLTRSRGRA) form a helical membrane-spanning segment. Residues 1 to 114 (MVAPVWYLVA…VEKPAETHLS (114 aa)) form a mediates interaction with CDK5RAP3 region. At 29–314 (ASAGQEPLHN…GRESPAQAPA (286 aa)) the chain is on the cytoplasmic side. 2 disordered regions span residues 31-75 (AGQE…SRLQ) and 100-186 (QEEE…QREH). 2 positions are modified to phosphoserine: S72 and S114. The tract at residues 118 to 216 (GAKKLRKLEE…MTEEQSQSFL (99 aa)) is mediates interaction with TRIP4. Over residues 124–186 (KLEEKQARKA…AREEQAQREH (63 aa)) the composition is skewed to basic and acidic residues. The UFM1-interacting motif (UFIM) signature appears at 195–209 (AFVVEEEGVGETMTE). The segment at 216–314 (LTEFINYIKQ…GRESPAQAPA (99 aa)) is mediates interaction with UFL1. The region spanning 229–273 (VLLEDLASQVGLRTQDTINRIQDLLAEGTITGVIDDRGKFIYITP) is the PCI domain. K267 participates in a covalent cross-link: Glycyl lysine isopeptide (Lys-Gly) (interchain with G-Cter in UFM1).

This sequence belongs to the DDRGK1 family. As to quaternary structure, component of the UFM1 ribosome E3 ligase (UREL) complex, composed of UFL1, DDRGK1 and CDK5RAP3. Interacts with (unphosphorylated) ERN1/IRE1-alpha; interaction is dependent on UFM1 and takes place in response to endoplasmic reticulum stress, regulating ERN1/IRE1-alpha stability. Interacts with NFKBIA. Interacts with SOX9. Ubiquitinated. Ubiquitination probably triggers proteasomal degradation and is negatively regulated by UFL1, the enzyme involved in the ufmylation of DDRGK1. In terms of processing, ufmylated; conjugated to ubiquitin-like protein UFM1, probably at Lys-267 by UFL1. The relevance of ufmylation is however unclear: as DDRGK1 acts as a substrate adapters for ufmylation, it is uncertain whether ufmylation is a collateral effect of ufmylation process or is required to regulate its activity. In terms of tissue distribution, widely expressed (at protein level). In the brain, highest levels in medulla oblongata, followed by cerebral cortex, cerebellum and frontal lobe.

It is found in the endoplasmic reticulum membrane. Its function is as follows. Component of the UFM1 ribosome E3 ligase (UREL) complex, a multiprotein complex that catalyzes ufmylation of endoplasmic reticulum-docked proteins. The UREL complex plays a key role in ribosome recycling by mediating mono-ufmylation of the RPL26/uL24 subunit of the 60S ribosome following ribosome dissociation: ufmylation weakens the junction between post-termination 60S subunits and SEC61 translocons, promoting release and recycling of the large ribosomal subunit from the endoplasmic reticulum membrane. Ufmylation of RPL26/uL24 and subsequent 60S ribosome recycling either take place after normal termination of translation or after ribosome stalling during cotranslational translocation at the endoplasmic reticulum. Within the UREL complex, DDRGK1 tethers the complex to the endoplasmic reticulum membrane to restrict its activity to endoplasmic reticulum-docked ribosomes and acts as an ufmylation 'reader': following RPL26/uL24 ufmylation, DDRGK1 specifically binds to ufmylated RPL26/uL24 via its UFIM motif, resulting in stable association between the 60S ribosome and the UREL complex, followed by dissociation of the 60S ribosome subunit from the endoplasmic reticulum membrane. The UREL complex is also involved in reticulophagy in response to endoplasmic reticulum stress by promoting ufmylation of proteins such as CYB5R3 and RPN1, thereby promoting lysosomal degradation of ufmylated proteins. Ufmylation-dependent reticulophagy inhibits the unfolded protein response (UPR) by regulating ERN1/IRE1-alpha stability. Acts as a regulator of immunity by promoting differentiation of B-cells into plasma cells: acts by promoting expansion of the endoplasmic reticulum and regulating the unfolded protein response (UPR). May also be required for TRIP4 ufmylation. May play a role in NF-kappa-B-mediated transcription through regulation of the phosphorylation and the degradation of NFKBIA, the inhibitor of NF-kappa-B. Plays a role in cartilage development through SOX9, inhibiting the ubiquitin-mediated proteasomal degradation of this transcriptional regulator. Required for stabilization and ufmylation of ATG9A. In Homo sapiens (Human), this protein is DDRGK domain-containing protein 1.